Consider the following 302-residue polypeptide: Probable 2-(5''-triphosphoribosyl)-3'-dephosphocoenzyme-A synthase (302 aa).

It belongs to the CitG/MdcB family.

It catalyses the reaction 3'-dephospho-CoA + ATP = 2'-(5''-triphospho-alpha-D-ribosyl)-3'-dephospho-CoA + adenine. The sequence is that of Probable 2-(5''-triphosphoribosyl)-3'-dephosphocoenzyme-A synthase from Salmonella gallinarum (strain 287/91 / NCTC 13346).